A 441-amino-acid polypeptide reads, in one-letter code: N-succinylarginine dihydrolase (441 aa).

Substrate is bound by residues 19 to 28, Asn-110, and 137 to 138; these read AGLSFGNEAS and HR. Glu-174 is a catalytic residue. Substrate is bound at residue Arg-212. Residue His-248 is part of the active site. Residues Asp-250 and Asn-359 each contribute to the substrate site. Catalysis depends on Cys-365, which acts as the Nucleophile.

The protein belongs to the succinylarginine dihydrolase family. In terms of assembly, homodimer.

The catalysed reaction is N(2)-succinyl-L-arginine + 2 H2O + 2 H(+) = N(2)-succinyl-L-ornithine + 2 NH4(+) + CO2. The protein operates within amino-acid degradation; L-arginine degradation via AST pathway; L-glutamate and succinate from L-arginine: step 2/5. Its function is as follows. Catalyzes the hydrolysis of N(2)-succinylarginine into N(2)-succinylornithine, ammonia and CO(2). The protein is N-succinylarginine dihydrolase of Erwinia tasmaniensis (strain DSM 17950 / CFBP 7177 / CIP 109463 / NCPPB 4357 / Et1/99).